A 523-amino-acid chain; its full sequence is Peptide chain release factor 3 (523 aa).

The tr-type G domain maps to 10-277; it reads EKRRTFAIIS…SFVDLAPAPE (268 aa). GTP contacts are provided by residues 19–26, 87–91, and 141–144; these read SHPDAGKT, DTPGH, and NKLD.

The protein belongs to the TRAFAC class translation factor GTPase superfamily. Classic translation factor GTPase family. PrfC subfamily.

It localises to the cytoplasm. Increases the formation of ribosomal termination complexes and stimulates activities of RF-1 and RF-2. It binds guanine nucleotides and has strong preference for UGA stop codons. It may interact directly with the ribosome. The stimulation of RF-1 and RF-2 is significantly reduced by GTP and GDP, but not by GMP. The polypeptide is Peptide chain release factor 3 (Lactobacillus acidophilus (strain ATCC 700396 / NCK56 / N2 / NCFM)).